A 1259-amino-acid polypeptide reads, in one-letter code: Clustered mitochondria protein homolog (1259 aa).

Polar residues predominate over residues 1-27 (MSQTNGNMEHSKETPQSQEVEQLTNGN). The tract at residues 1–38 (MSQTNGNMEHSKETPQSQEVEQLTNGNHPEEQQEEEEN) is disordered. In terms of domain architecture, Clu spans 324–568 (DITRSQESYL…RVTPLDVMWQ (245 aa)). Composition is skewed to basic and acidic residues over residues 612 to 628 (AEAEKEKPAESSESKEQ) and 634 to 647 (TEEKTEESSDQERV). Disordered stretches follow at residues 612-647 (AEAEKEKPAESSESKEQDSEEKTEEKTEESSDQERV) and 881-908 (VVNGANNAAQDEGKKKKKKGADKSPSRA). TPR repeat units follow at residues 982–1015 (AKLYHQLSMLYYQTDEKEAAVELARKAVIVTERT), 1024–1057 (ILAYLNLSLFEHASGNTKTALVYIKHAMDLWKII), and 1066–1099 (ITTMNNAAVMLQHLKQYADSRKWFEASLSVCESL). Disordered regions lie at residues 1192 to 1215 (TKVQPQVGQTAPEASGAKNAANAS) and 1229 to 1259 (EGGDTSSSRSKQKKRAAASNPKLRGSKKSSA).

It belongs to the CLU family. In terms of assembly, may associate with the eukaryotic translation initiation factor 3 (eIF-3) complex.

The protein resides in the cytoplasm. MRNA-binding protein involved in proper cytoplasmic distribution of mitochondria. The chain is Clustered mitochondria protein homolog from Aspergillus clavatus (strain ATCC 1007 / CBS 513.65 / DSM 816 / NCTC 3887 / NRRL 1 / QM 1276 / 107).